We begin with the raw amino-acid sequence, 152 residues long: Ribosome maturation factor RimP (152 aa).

The protein belongs to the RimP family.

The protein resides in the cytoplasm. Functionally, required for maturation of 30S ribosomal subunits. This is Ribosome maturation factor RimP from Shigella boydii serotype 4 (strain Sb227).